Here is a 1072-residue protein sequence, read N- to C-terminus: DNA-directed RNA polymerase subunit beta (1072 aa).

This sequence belongs to the RNA polymerase beta chain family. As to quaternary structure, in plastids the minimal PEP RNA polymerase catalytic core is composed of four subunits: alpha, beta, beta', and beta''. When a (nuclear-encoded) sigma factor is associated with the core the holoenzyme is formed, which can initiate transcription.

It is found in the plastid. It localises to the chloroplast. The catalysed reaction is RNA(n) + a ribonucleoside 5'-triphosphate = RNA(n+1) + diphosphate. DNA-dependent RNA polymerase catalyzes the transcription of DNA into RNA using the four ribonucleoside triphosphates as substrates. This is DNA-directed RNA polymerase subunit beta from Lemna minor (Common duckweed).